Here is a 698-residue protein sequence, read N- to C-terminus: UV radiation resistance-associated protein (698 aa).

The segment covering 1 to 10 has biased composition (low complexity); it reads MSSCASLGGP. Residues 1–21 are disordered; sequence MSSCASLGGPVPLPPPGPSAA. One can recognise a C2 domain in the interval 23 to 149; the sequence is TSGAPARALH…YLGQQIHARN (127 aa). A sufficient for interaction with STX7; VTI1B AND STX8 region spans residues 199–268; the sequence is HRAQCAIKQT…REVAFLHKQQ (70 aa). The stretch at 200 to 304 forms a coiled coil; the sequence is RAQCAIKQTQ…LRKECTAKRE (105 aa). The sufficient for interaction with VPS16, required for interaction with CEP63 stretch occupies residues 269–441; that stretch reads MALQDKGSAF…IAQLRYQHGL (173 aa). The required for interaction with PRKDC, XRCC6 and XRCC5 stretch occupies residues 442 to 698; that stretch reads GTPDLRQTLP…FRRPRRSSDK (257 aa). Disordered stretches follow at residues 477–551 and 565–586; these read PKRQ…SSLD and VDLG…EQGE. Serine 492 bears the Phosphoserine mark. The residue at position 497 (serine 497) is a Phosphoserine; by MTOR. At serine 507 the chain carries Phosphoserine. Threonine 517 carries the phosphothreonine modification. Phosphoserine occurs at positions 521, 548, 549, 570, and 688.

As to quaternary structure, component of the PI3K (PI3KC3/PI3K-III/class III phosphatidylinositol 3-kinase) complex II (PI3KC3-C2) in which the core composed of the catalytic subunit PIK3C3, the regulatory subunit PIK3R4 and BECN1 is associated with UVRAG; in the complex interacts directly with BECN1. PI3KC3-C2 can associate with further regulatory subunits such as RUBCN and probably SH3GLB1/Bif-1. Interacts with SH3GLB1; UVRAG bridges the interaction to BECN1 indicative for an association with the PI3K complex PI3KC3-C2. Interacts with RINT1. Associates with the NRZ complex under basal conditions and dissociates from it under autophagy conditions to associate with the PI3K complex; these complex associations seem to be mutually exclusive. Interacts with VPS16; VPS11; VPS18; VPS33 (VPS33A or VPS33B) and VPS39; indicative for an association with a class C Vps tethering complex (possibly the HOPS complex). Interacts with RAB7A; RAB7A competes with UVRAG for RUBCN binding. Interacts with STX7, VTI1B, STX8. Interacts with PRKDC, XRCC6 and XRCC5; indicative for an association with the DNA-dependent protein kinase complex DNA-PK. Interacts with CEP63. Directly interacts with FEZ1 and SCOC; the interaction with SCOC is reduced by amino acid starvation, but the complex is stabilized in the presence of FEZ1. Interacts with BECN1P1/BECN2. Interacts with SLAMF1. Interacts with RUBCNL/PACER; promoting targeting of UVRAG to autophagosome. Interacts with WNK1. In terms of processing, phosphorylated at Ser-497 by MTOR under basal conditions; increases the interaction with RUBCN implicated in inhibitory effect of RUBCN on PI3KC3 and decreases interaction with RAB7A, and VPS16 and VPS39 (indicative for a class C Vps complex, possibly the HOPS complex).

It is found in the late endosome. Its subcellular location is the lysosome. It localises to the cytoplasmic vesicle. The protein localises to the autophagosome. The protein resides in the early endosome. It is found in the endoplasmic reticulum. Its subcellular location is the midbody. It localises to the chromosome. The protein localises to the centromere. Its function is as follows. Versatile protein that is involved in regulation of different cellular pathways implicated in membrane trafficking. Involved in regulation of the COPI-dependent retrograde transport from Golgi and the endoplasmic reticulum by associating with the NRZ complex; the function is dependent on its binding to phosphatidylinositol 3-phosphate (PtdIns(3)P). During autophagy acts as a regulatory subunit of the alternative PI3K complex II (PI3KC3-C2) that mediates formation of phosphatidylinositol 3-phosphate and is believed to be involved in maturation of autophagosomes and endocytosis. Activates lipid kinase activity of PIK3C3. Involved in the regulation of degradative endocytic trafficking and cytokinesis, and in regulation of ATG9A transport from the Golgi to the autophagosome; the functions seems to implicate its association with PI3KC3-C2. Involved in maturation of autophagosomes and degradative endocytic trafficking independently of BECN1 but depending on its association with a class C Vps complex (possibly the HOPS complex); the association is also proposed to promote autophagosome recruitment and activation of Rab7 and endosome-endosome fusion events. Enhances class C Vps complex (possibly HOPS complex) association with a SNARE complex and promotes fusogenic SNARE complex formation during late endocytic membrane fusion. In case of negative-strand RNA virus infection is required for efficient virus entry, promotes endocytic transport of virions and is implicated in a VAMP8-specific fusogenic SNARE complex assembly. Involved in maintaining chromosomal stability. Promotes DNA double-strand break (DSB) repair by association with DNA-dependent protein kinase complex DNA-PK and activating it in non-homologous end joining (NHEJ). Required for centrosome stability and proper chromosome segregation. The polypeptide is UV radiation resistance-associated protein (Uvrag) (Mus musculus (Mouse)).